We begin with the raw amino-acid sequence, 382 residues long: Mannitol-1-phosphate 5-dehydrogenase (382 aa).

3-14 is an NAD(+) binding site; it reads ALHFGAGNIGRG.

The protein belongs to the mannitol dehydrogenase family.

The enzyme catalyses D-mannitol 1-phosphate + NAD(+) = beta-D-fructose 6-phosphate + NADH + H(+). This chain is Mannitol-1-phosphate 5-dehydrogenase (mtlD), found in Klebsiella pneumoniae.